Consider the following 378-residue polypeptide: Anhydro-N-acetylmuramic acid kinase 2 (378 aa).

14–22 (GTVLDGNID) serves as a coordination point for ATP.

The protein belongs to the anhydro-N-acetylmuramic acid kinase family.

It catalyses the reaction 1,6-anhydro-N-acetyl-beta-muramate + ATP + H2O = N-acetyl-D-muramate 6-phosphate + ADP + H(+). Its pathway is amino-sugar metabolism; 1,6-anhydro-N-acetylmuramate degradation. The protein operates within cell wall biogenesis; peptidoglycan recycling. Its function is as follows. Catalyzes the specific phosphorylation of 1,6-anhydro-N-acetylmuramic acid (anhMurNAc) with the simultaneous cleavage of the 1,6-anhydro ring, generating MurNAc-6-P. Is required for the utilization of anhMurNAc either imported from the medium or derived from its own cell wall murein, and thus plays a role in cell wall recycling. The polypeptide is Anhydro-N-acetylmuramic acid kinase 2 (Jannaschia sp. (strain CCS1)).